The primary structure comprises 130 residues: Small ribosomal subunit protein uS8 (130 aa).

Belongs to the universal ribosomal protein uS8 family. Part of the 30S ribosomal subunit. Contacts proteins S5 and S12.

In terms of biological role, one of the primary rRNA binding proteins, it binds directly to 16S rRNA central domain where it helps coordinate assembly of the platform of the 30S subunit. The protein is Small ribosomal subunit protein uS8 of Cereibacter sphaeroides (strain KD131 / KCTC 12085) (Rhodobacter sphaeroides).